The sequence spans 370 residues: DNA repair protein RAD51 homolog 2 (370 aa).

ATP is bound at residue 109-116 (GPPGIGKS).

It belongs to the RecA family. RAD51 subfamily. As to expression, preferentially expressed in flower buds and roots.

Its subcellular location is the nucleus. Its function is as follows. May be involved in the homologous recombination repair (HRR) pathway of double-stranded DNA breaks arising during DNA replication or induced by DNA-damaging agents. This chain is DNA repair protein RAD51 homolog 2 (RAD51B), found in Arabidopsis thaliana (Mouse-ear cress).